The following is a 395-amino-acid chain: Lipoyl synthase, mitochondrial (395 aa).

The N-terminal 24 residues, 1-24, are a transit peptide targeting the mitochondrion; sequence MVKLPSASRIRSLATVPSTATRAF. Cys107, Cys112, Cys118, Cys137, Cys141, Cys144, and Ser357 together coordinate [4Fe-4S] cluster. A Radical SAM core domain is found at 122–346; sequence GKGNATATIM…KNVAEGMGFL (225 aa).

Belongs to the radical SAM superfamily. Lipoyl synthase family. Requires [4Fe-4S] cluster as cofactor.

The protein resides in the mitochondrion. It catalyses the reaction [[Fe-S] cluster scaffold protein carrying a second [4Fe-4S](2+) cluster] + N(6)-octanoyl-L-lysyl-[protein] + 2 oxidized [2Fe-2S]-[ferredoxin] + 2 S-adenosyl-L-methionine + 4 H(+) = [[Fe-S] cluster scaffold protein] + N(6)-[(R)-dihydrolipoyl]-L-lysyl-[protein] + 4 Fe(3+) + 2 hydrogen sulfide + 2 5'-deoxyadenosine + 2 L-methionine + 2 reduced [2Fe-2S]-[ferredoxin]. The protein operates within protein modification; protein lipoylation via endogenous pathway; protein N(6)-(lipoyl)lysine from octanoyl-[acyl-carrier-protein]: step 2/2. Catalyzes the radical-mediated insertion of two sulfur atoms into the C-6 and C-8 positions of the octanoyl moiety bound to the lipoyl domains of lipoate-dependent enzymes, thereby converting the octanoylated domains into lipoylated derivatives. The sequence is that of Lipoyl synthase, mitochondrial from Cryptococcus neoformans var. neoformans serotype D (strain B-3501A) (Filobasidiella neoformans).